Here is a 786-residue protein sequence, read N- to C-terminus: Tyrosine-protein kinase Btk (786 aa).

A disordered region spans residues 1-23; the sequence is MMGTKHRNSHVNGSIKSSSSLRS. Positions 14-23 are enriched in low complexity; it reads SIKSSSSLRS. One can recognise a PH domain in the interval 41–184; that stretch reads DVVKSGSMVK…WIRAIRQVCE (144 aa). Residues 187-223 form a Btk-type zinc finger; it reads NTPKSYRYHPGLWSGKKWSCCKGLSRTTFGCRAAAHW. Zn(2+)-binding residues include histidine 195, cysteine 206, cysteine 207, and cysteine 217. Over residues 226–240 the composition is skewed to low complexity; sequence ANNNPSNGSSPAQNS. Positions 226-301 are disordered; the sequence is ANNNPSNGSS…TPTSLQPQSS (76 aa). The segment covering 241–260 has biased composition (polar residues); sequence TRSISPNSSTTNSQFSLQHN. The segment covering 264–290 has biased composition (gly residues); sequence SLGGGVGGGLGGGGSLGLGGGGGGGGS. The span at 291–301 shows a compositional bias: polar residues; the sequence is CTPTSLQPQSS. The SH3 domain maps to 342 to 402; sequence HFVKLVVALY…PSNYVKPKAL (61 aa). In terms of domain architecture, SH2 spans 410–503; that stretch reads WYVGDMSRQR…GLACRLKSSP (94 aa). A Protein kinase domain is found at 526–779; sequence LMLMEELGSG…FRVLMDQLAL (254 aa). Residues 532-540 and lysine 554 each bind ATP; that span reads LGSGQFGVV. Aspartate 647 acts as the Proton acceptor in catalysis. Position 677 is a phosphotyrosine; by autocatalysis (tyrosine 677).

This sequence belongs to the protein kinase superfamily. Tyr protein kinase family. TEC subfamily. Zn(2+) is required as a cofactor. As to expression, ring canals in the egg chambers and imaginal disks of third-instar larvae.

The catalysed reaction is L-tyrosyl-[protein] + ATP = O-phospho-L-tyrosyl-[protein] + ADP + H(+). Required for proper ring canal development. Also required for the development of male genitalia and for adult survival. This chain is Tyrosine-protein kinase Btk, found in Drosophila melanogaster (Fruit fly).